The following is a 137-amino-acid chain: Diacylglycerol kinase (137 aa).

A divalent metal cation is bound at residue E42. 2 consecutive transmembrane segments (helical) span residues 49-67 (LIAF…ATFF) and 73-89 (AILF…NTAI). The active-site Proton acceptor is E83. E90 contributes to the a divalent metal cation binding site. A helical transmembrane segment spans residues 112-132 (SFACLCLIVANGVYAAYVVIF).

It belongs to the bacterial diacylglycerol kinase family. Mg(2+) serves as cofactor.

It is found in the cell inner membrane. The catalysed reaction is a 1,2-diacyl-sn-glycerol + ATP = a 1,2-diacyl-sn-glycero-3-phosphate + ADP + H(+). Catalyzes the ATP-dependent phosphorylation of sn-l,2-diacylglycerol (DAG) to phosphatidic acid. Involved in the recycling of diacylglycerol produced as a by-product during membrane-derived oligosaccharide (MDO) biosynthesis. This Sinorhizobium sp protein is Diacylglycerol kinase (dgkA).